The sequence spans 361 residues: tRNA-specific 2-thiouridylase MnmA (361 aa).

Residues 9-16 (GMSGGVDS) and Met-35 contribute to the ATP site. The segment at 95–97 (NPD) is interaction with target base in tRNA. Catalysis depends on Cys-100, which acts as the Nucleophile. A disulfide bridge links Cys-100 with Cys-196. Residue Gly-124 participates in ATP binding. Residues 146–148 (KDQ) form an interaction with tRNA region. The active-site Cysteine persulfide intermediate is Cys-196. An interaction with tRNA region spans residues 308–309 (RY).

It belongs to the MnmA/TRMU family.

The protein resides in the cytoplasm. It catalyses the reaction S-sulfanyl-L-cysteinyl-[protein] + uridine(34) in tRNA + AH2 + ATP = 2-thiouridine(34) in tRNA + L-cysteinyl-[protein] + A + AMP + diphosphate + H(+). Catalyzes the 2-thiolation of uridine at the wobble position (U34) of tRNA, leading to the formation of s(2)U34. The polypeptide is tRNA-specific 2-thiouridylase MnmA (Nitrosomonas eutropha (strain DSM 101675 / C91 / Nm57)).